Reading from the N-terminus, the 223-residue chain is Ribose-5-phosphate isomerase A (223 aa).

Substrate is bound by residues 32–35, 85–88, and 98–101; these read TGST, DGAD, and KGGG. Glu-107 functions as the Proton acceptor in the catalytic mechanism. Residue Lys-125 coordinates substrate.

This sequence belongs to the ribose 5-phosphate isomerase family. As to quaternary structure, homodimer.

The catalysed reaction is aldehydo-D-ribose 5-phosphate = D-ribulose 5-phosphate. It participates in carbohydrate degradation; pentose phosphate pathway; D-ribose 5-phosphate from D-ribulose 5-phosphate (non-oxidative stage): step 1/1. Functionally, catalyzes the reversible conversion of ribose-5-phosphate to ribulose 5-phosphate. The protein is Ribose-5-phosphate isomerase A of Pseudomonas fluorescens (strain ATCC BAA-477 / NRRL B-23932 / Pf-5).